We begin with the raw amino-acid sequence, 269 residues long: Histone doublet H2B-H2A (269 aa).

Residues 1–168 (MATQKETTRK…LAGNAARDSK (168 aa)) form a histone fold region. Residues 210-249 (RKKARKTTEKEASSPKKKAAPKKKKAASKQKKSLSDKELA) form a disordered region. Basic residues predominate over residues 224–241 (PKKKAAPKKKKAASKQKK).

It localises to the host nucleus. The protein resides in the host cytoplasm. Its subcellular location is the virion. In terms of biological role, histone-like protein that is recruited to viral factories during viral replication and participates in viral DNA packaging and virion production probably by forming unstable nucleosome-like particles. May compact the viral DNA. The protein is Histone doublet H2B-H2A of Melbournevirus (MelV).